A 1813-amino-acid polypeptide reads, in one-letter code: Sucrase-isomaltase, intestinal (1813 aa).

The Cytoplasmic segment spans residues 1–12; it reads MARKKSSGLKIT. S7 is subject to Phosphoserine; by PKA. A helical; Signal-anchor for type II membrane protein membrane pass occupies residues 13–32; the sequence is LIVLLAIVTIIAIALVAILP. Residues 33 to 1813 are Lumenal-facing; that stretch reads TKTPAVELVS…LDEPIEISWT (1781 aa). In terms of domain architecture, P-type 1 spans 46–95; it reads GKCPSAENDRLDEKINCIPDQFPTQALCAMQGCCWNPRNESPTPWCSFAN. 3 disulfide bridges follow: C48–C79, C62–C78, and C73–C91. The interval 95-991 is isomaltase; sequence NNHGYEFEKI…DLELNTATAR (897 aa). N-linked (GlcNAc...) asparagine glycosylation occurs at N127. Residues D250 and D374 each coordinate substrate. Y377 is subject to Sulfotyrosine. Residue N388 is glycosylated (N-linked (GlcNAc...) asparagine). D491 acts as the Nucleophile; for isomaltase activity in catalysis. A disulfide bond links C506 and C531. R574 is a substrate binding site. Catalysis depends on D590, which acts as the For isomaltase activity. A disulfide bridge connects residues C621 and C632. Residue H648 participates in substrate binding. Residues N669, N791, N896, and N911 are each glycosylated (N-linked (GlcNAc...) asparagine). Residues 917 to 962 enclose the P-type 2 domain; sequence NQVSLDSEKIDCFPDNNPENKQNCEERGCLWEPNSAAEGPRCYFPK. The segment at 992 to 1813 is sucrase; it reads IKMPSNPISV…LDEPIEISWT (822 aa). 2 N-linked (GlcNAc...) asparagine glycosylation sites follow: N1221 and N1289. Y1294 carries the sulfotyrosine modification. Residues N1326 and N1340 are each glycosylated (N-linked (GlcNAc...) asparagine). Y1368 and Y1371 each carry sulfotyrosine. The active-site Nucleophile; for sucrase activity is D1380. The active-site For sucrase activity is E1383. N1432 is a glycosylation site (N-linked (GlcNAc...) asparagine). Catalysis depends on D1486, which acts as the Proton donor; for sucrase activity. N1521, N1545, N1558, N1703, and N1772 each carry an N-linked (GlcNAc...) asparagine glycan.

Belongs to the glycosyl hydrolase 31 family. In terms of assembly, the resulting sucrase and isomaltase subunits stay associated with one another in a complex by non-covalent linkages. Post-translationally, the precursor is proteolytically cleaved when exposed to pancreatic proteases in the intestinal lumen. In terms of processing, sulfated.

The protein localises to the apical cell membrane. The catalysed reaction is Hydrolysis of sucrose and maltose by an alpha-D-glucosidase-type action.. It carries out the reaction Hydrolysis of (1-&gt;6)-alpha-D-glucosidic linkages in some oligosaccharides produced from starch and glycogen by alpha-amylase, and in isomaltose.. Functionally, plays an important role in the final stage of carbohydrate digestion. Isomaltase activity is specific for both alpha-1,4- and alpha-1,6-oligosaccharides. This is Sucrase-isomaltase, intestinal (SI) from Suncus murinus (Asian house shrew).